Consider the following 167-residue polypeptide: NAD(P)H-quinone oxidoreductase subunit I, chloroplastic (167 aa).

4Fe-4S ferredoxin-type domains lie at 55–84 (GRIHFEFDKCIACEVCVRVCPIDLPVVDWK) and 95–124 (LNYSIDFGICIFCGNCVEYCPTNCLSMTEE). [4Fe-4S] cluster-binding residues include C64, C67, C70, C74, C104, C107, C110, and C114.

This sequence belongs to the complex I 23 kDa subunit family. NDH is composed of at least 16 different subunits, 5 of which are encoded in the nucleus. The cofactor is [4Fe-4S] cluster.

Its subcellular location is the plastid. It is found in the chloroplast thylakoid membrane. The catalysed reaction is a plastoquinone + NADH + (n+1) H(+)(in) = a plastoquinol + NAD(+) + n H(+)(out). It catalyses the reaction a plastoquinone + NADPH + (n+1) H(+)(in) = a plastoquinol + NADP(+) + n H(+)(out). Functionally, NDH shuttles electrons from NAD(P)H:plastoquinone, via FMN and iron-sulfur (Fe-S) centers, to quinones in the photosynthetic chain and possibly in a chloroplast respiratory chain. The immediate electron acceptor for the enzyme in this species is believed to be plastoquinone. Couples the redox reaction to proton translocation, and thus conserves the redox energy in a proton gradient. This is NAD(P)H-quinone oxidoreductase subunit I, chloroplastic from Aethionema grandiflorum (Persian stone-cress).